Consider the following 339-residue polypeptide: Lymphocyte-specific protein 1 (339 aa).

A disordered region spans residues 1–198; that stretch reads MAEASSDPGA…SPPLSPTTKL (198 aa). Serine 24 bears the Phosphoserine mark. Composition is skewed to basic and acidic residues over residues 32–43 and 51–61; these read VHEQCQHERDRQ and GGGHVPERPKQ. The residue at position 111 (serine 111) is a Phosphoserine. Over residues 117–140 the composition is skewed to basic and acidic residues; sequence EDRPGLHAYEKEDSDEVHLEELSL. Threonine 175 is subject to Phosphothreonine. 4 positions are modified to phosphoserine: serine 177, serine 188, serine 189, and serine 193. The span at 185–196 shows a compositional bias: polar residues; sequence IEQSSPPLSPTT. The residue at position 252 (serine 252) is a Phosphoserine; by MAPKAPK2. The disordered stretch occupies residues 294–315; that stretch reads KSLWEQKGGSKTSSTIKSTPSG. Residues 300–315 are compositionally biased toward low complexity; the sequence is KGGSKTSSTIKSTPSG. N6-acetyllysine is present on lysine 327.

In terms of assembly, binds actin. Phosphorylated by casein kinase II, protein kinase C and MAPKAPK2. Phosphorylation by PKC induces translocation from membrane to cytoplasm. Phosphorylation by MAPKAPK2 may regulate neutrophil chemotaxis. Activated T-lymphocytes.

Its subcellular location is the cell membrane. Its function is as follows. May play a role in mediating neutrophil activation and chemotaxis. The protein is Lymphocyte-specific protein 1 (LSP1) of Homo sapiens (Human).